Here is a 232-residue protein sequence, read N- to C-terminus: UPF0177 protein in abiGi 5'region (232 aa).

6 helical membrane-spanning segments follow: residues 12 to 32 (YLSL…ILAY), 47 to 67 (VVAT…GILI), 86 to 106 (LLFL…SYTY), 124 to 144 (SIQI…APIF), 165 to 185 (IVSC…LIVY), and 206 to 226 (ILVH…LQVI).

This sequence belongs to the UPF0177 family.

The protein resides in the cell membrane. Its function is as follows. The function of this protein is currently unknown, but it has been shown that it is not necessary for phage resistance. In Lactococcus lactis subsp. cremoris (Streptococcus cremoris), this protein is UPF0177 protein in abiGi 5'region.